The primary structure comprises 362 residues: Dihydroorotate dehydrogenase (quinone) (362 aa).

FMN contacts are provided by residues 62–66 (AGYDK) and T86. K66 contributes to the substrate binding site. 111–115 (NRLGF) lines the substrate pocket. Residues N139 and N170 each coordinate FMN. N170 lines the substrate pocket. Residue S173 is the Nucleophile of the active site. Residue N175 participates in substrate binding. Positions 215 and 243 each coordinate FMN. 244 to 245 (NT) is a binding site for substrate. Residues G266, G295, and 316–317 (YS) contribute to the FMN site.

Belongs to the dihydroorotate dehydrogenase family. Type 2 subfamily. As to quaternary structure, monomer. The cofactor is FMN.

Its subcellular location is the cell membrane. The enzyme catalyses (S)-dihydroorotate + a quinone = orotate + a quinol. The protein operates within pyrimidine metabolism; UMP biosynthesis via de novo pathway; orotate from (S)-dihydroorotate (quinone route): step 1/1. In terms of biological role, catalyzes the conversion of dihydroorotate to orotate with quinone as electron acceptor. The polypeptide is Dihydroorotate dehydrogenase (quinone) (Rhizobium rhizogenes (strain K84 / ATCC BAA-868) (Agrobacterium radiobacter)).